The primary structure comprises 902 residues: 4-hydroxyphenylacetate decarboxylase glycyl radical subunit (902 aa).

Residues 38–774 (KRAEDLLDVY…ATLATPDGRL (737 aa)) form the PFL domain. Residues serine 348 and cysteine 507 each contribute to the 4-hydroxyphenylacetate site. Residue cysteine 507 is the Cysteine radical intermediate of the active site. Catalysis depends on glutamate 509, which acts as the Proton donor. 4-hydroxyphenylacetate contacts are provided by histidine 540 and glutamate 641. The Glycine radical domain maps to 782 to 902 (GSVSAYAGTD…VIARTEYEGV (121 aa)). Position 877 is a glycine radical (glycine 877).

This sequence belongs to the glycyl radical enzyme (GRE) family. HPAD subfamily. Heterooctamer consisting of 4 large (HpdB) subunits and 4 small (HpdC) subunits. Also forms a catalytically inactive homodimer. Post-translationally, phosphorylated on serine. Phosphorylation may trigger the formation of the active heterooctamers and thereby regulates enzyme activity. Requires the activating protein HpdA to generate the key active site glycyl radical that is involved in catalysis.

The enzyme catalyses 4-hydroxyphenylacetate + H(+) = 4-methylphenol + CO2. It carries out the reaction 3,4-dihydroxyphenylacetate + H(+) = 4-methylcatechol + CO2. It catalyses the reaction 2-hydroxy-2-(4-hydroxyphenyl)acetate + H(+) = 4-hydroxybenzyl alcohol + CO2. With respect to regulation, enzyme activity catalyzed by the HPA decarboxylase complex is rapidly and irreversibly inactivated by oxygen. Competitively inhibited by p-hydroxyphenylacetamide. Not inhibited by m- or o-hydroxyphenyl-acetate, p-hydroxybenzoate or p-hydroxyphenylpropionate. Functionally, glycyl radical subunit of the HPA decarboxylase that decarboxylates phenylacetates with a hydroxyl group in the p-position. Active toward 4-hydroxyphenylacetate, 3,4-dihydroxyphenylacetate and to a lesser extent p-hydroxymandelate (2-hydroxy-2-(4-hydroxyphenyl)acetate), forming 4-methylphenol, 4-methylcatechol and 4-hydroxybenzylalcohol, respectively. Is likely involved in the catabolism of aromatic amino acids such as tyrosine fermentation. 4-methylphenol (p-cresol) formation provides metabolic toxicity, which may benefit the pathogen C.difficile by suppression of the endogenous gastrointestinal microflora, allowing the development of gastrointestinal infections. The large subunit is the catalytic subunit that binds the substrate. In Clostridioides difficile (Peptoclostridium difficile), this protein is 4-hydroxyphenylacetate decarboxylase glycyl radical subunit.